A 196-amino-acid chain; its full sequence is Segregation and condensation protein B (196 aa).

Belongs to the ScpB family. As to quaternary structure, homodimer. Homodimerization may be required to stabilize the binding of ScpA to the Smc head domains. Component of a cohesin-like complex composed of ScpA, ScpB and the Smc homodimer, in which ScpA and ScpB bind to the head domain of Smc. The presence of the three proteins is required for the association of the complex with DNA.

The protein localises to the cytoplasm. In terms of biological role, participates in chromosomal partition during cell division. May act via the formation of a condensin-like complex containing Smc and ScpA that pull DNA away from mid-cell into both cell halves. The protein is Segregation and condensation protein B of Pediococcus pentosaceus (strain ATCC 25745 / CCUG 21536 / LMG 10740 / 183-1w).